A 378-amino-acid polypeptide reads, in one-letter code: Queuine tRNA-ribosyltransferase (378 aa).

Aspartate 91 (proton acceptor) is an active-site residue. Substrate contacts are provided by residues 91–95, aspartate 145, glutamine 189, and glycine 216; that span reads DSGGF. The RNA binding stretch occupies residues 247-253; the sequence is GVGKPED. Aspartate 266 functions as the Nucleophile in the catalytic mechanism. An RNA binding; important for wobble base 34 recognition region spans residues 271–275; it reads TRNAR. Zn(2+) is bound by residues cysteine 304, cysteine 306, cysteine 309, and histidine 335.

The protein belongs to the queuine tRNA-ribosyltransferase family. Homodimer. Within each dimer, one monomer is responsible for RNA recognition and catalysis, while the other monomer binds to the replacement base PreQ1. Requires Zn(2+) as cofactor.

It catalyses the reaction 7-aminomethyl-7-carbaguanine + guanosine(34) in tRNA = 7-aminomethyl-7-carbaguanosine(34) in tRNA + guanine. It functions in the pathway tRNA modification; tRNA-queuosine biosynthesis. Catalyzes the base-exchange of a guanine (G) residue with the queuine precursor 7-aminomethyl-7-deazaguanine (PreQ1) at position 34 (anticodon wobble position) in tRNAs with GU(N) anticodons (tRNA-Asp, -Asn, -His and -Tyr). Catalysis occurs through a double-displacement mechanism. The nucleophile active site attacks the C1' of nucleotide 34 to detach the guanine base from the RNA, forming a covalent enzyme-RNA intermediate. The proton acceptor active site deprotonates the incoming PreQ1, allowing a nucleophilic attack on the C1' of the ribose to form the product. After dissociation, two additional enzymatic reactions on the tRNA convert PreQ1 to queuine (Q), resulting in the hypermodified nucleoside queuosine (7-(((4,5-cis-dihydroxy-2-cyclopenten-1-yl)amino)methyl)-7-deazaguanosine). This is Queuine tRNA-ribosyltransferase from Vibrio vulnificus (strain CMCP6).